Consider the following 251-residue polypeptide: uncharacterized protein (251 aa).

Residues histidine 6, histidine 8, glutamate 90, histidine 130, histidine 154, and aspartate 202 each contribute to the a divalent metal cation site.

This sequence belongs to the metallo-dependent hydrolases superfamily. TatD-type hydrolase family. A divalent metal cation serves as cofactor.

This is an uncharacterized protein from Haemophilus influenzae (strain ATCC 51907 / DSM 11121 / KW20 / Rd).